The sequence spans 384 residues: PqqA peptide cyclase (384 aa).

The region spanning 5 to 220 (VGLPLWLLAE…TNEYREKLKA (216 aa)) is the Radical SAM core domain. Residues Cys19, Cys23, and Cys26 each contribute to the [4Fe-4S] cluster site.

It belongs to the radical SAM superfamily. PqqE family. In terms of assembly, interacts with PqqD. The interaction is necessary for activity of PqqE. The cofactor is [4Fe-4S] cluster.

The enzyme catalyses [PQQ precursor protein] + S-adenosyl-L-methionine = E-Y cross-linked-[PQQ precursor protein] + 5'-deoxyadenosine + L-methionine + H(+). It functions in the pathway cofactor biosynthesis; pyrroloquinoline quinone biosynthesis. Its function is as follows. Catalyzes the cross-linking of a glutamate residue and a tyrosine residue in the PqqA protein as part of the biosynthesis of pyrroloquinoline quinone (PQQ). This chain is PqqA peptide cyclase, found in Acinetobacter baumannii (strain SDF).